Consider the following 116-residue polypeptide: Class I hydrophobin 1 (116 aa).

The first 19 residues, 1 to 19, serve as a signal peptide directing secretion; that stretch reads MLFKQAILVATTLTDLAVA. Intrachain disulfides connect Cys35–Cys95, Cys42–Cys89, Cys43–Cys76, and Cys96–Cys109. Residues Asn44 and Asn100 are each glycosylated (N-linked (GlcNAc...) asparagine).

Belongs to the fungal hydrophobin family. In terms of assembly, self-assembles to form functional amyloid fibrils called rodlets. Self-assembly into fibrillar rodlets occurs spontaneously at hydrophobic:hydrophilic interfaces and the rodlets further associate laterally to form amphipathic monolayers.

Its subcellular location is the secreted. The protein resides in the cell wall. Aerial growth, conidiation, and dispersal of filamentous fungi in the environment rely upon a capability of their secreting small amphipathic proteins called hydrophobins (HPBs) with low sequence identity. Class I can self-assemble into an outermost layer of rodlet bundles on aerial cell surfaces, conferring cellular hydrophobicity that supports fungal growth, development and dispersal; whereas Class II form highly ordered films at water-air interfaces through intermolecular interactions but contribute nothing to the rodlet structure. The sequence is that of Class I hydrophobin 1 from Pleurotus ostreatus (Oyster mushroom).